The following is an 81-amino-acid chain: Putative membrane protein insertion efficiency factor 1 (81 aa).

It belongs to the UPF0161 family.

The protein localises to the cell membrane. Functionally, could be involved in insertion of integral membrane proteins into the membrane. The chain is Putative membrane protein insertion efficiency factor 1 from Bacillus licheniformis (strain ATCC 14580 / DSM 13 / JCM 2505 / CCUG 7422 / NBRC 12200 / NCIMB 9375 / NCTC 10341 / NRRL NRS-1264 / Gibson 46).